Here is a 365-residue protein sequence, read N- to C-terminus: Aspartate-semialdehyde dehydrogenase (365 aa).

NADP(+) contacts are provided by T12, G13, S14, V15, S37, S40, L85, and D86. The active-site Acyl-thioester intermediate is C156. An NADP(+)-binding site is contributed by G188. H256 serves as the catalytic Proton acceptor. N343 serves as a coordination point for NADP(+).

The protein belongs to the aspartate-semialdehyde dehydrogenase family. As to quaternary structure, homotetramer; dimer of dimers.

It localises to the cytoplasm. The protein localises to the cytosol. Its subcellular location is the nucleus. It catalyses the reaction L-aspartate 4-semialdehyde + phosphate + NADP(+) = 4-phospho-L-aspartate + NADPH + H(+). The protein operates within amino-acid biosynthesis; L-methionine biosynthesis via de novo pathway; L-homoserine from L-aspartate: step 2/3. It functions in the pathway amino-acid biosynthesis; L-threonine biosynthesis; L-threonine from L-aspartate: step 2/5. With respect to regulation, inhibited by the non-competitive inhibitors phthalaldehyde and naphthalene, the competitive inhibitor 1,4-benzoquinone and derivates such as 2-chloro-3-methoxy-1,4-naphthoquinone, 2,3-dichloro-1,4-naphthoquinone, 2-chloro-1,4-naphthoquinone, 2-bromo-1,4-naphthoquinone and 2,3-dichloro-5,8-dihydroxy-1,4-naphthoquinone, and 5-aminoisoquinoline. Inhibited by vinyl sulfones. In terms of biological role, catalyzes the NADPH-dependent formation of L-aspartate 4-semialdehyde (L-ASA) by the reductive dephosphorylation of 4-phospho-L-aspartate. Mediates the second step in the biosynthesis of amino acids that derive from aspartate (the aspartate family of amino acids), including methioinine and threonine, the latter of which is a precursor to isoleucine. The protein is Aspartate-semialdehyde dehydrogenase of Candida albicans (strain SC5314 / ATCC MYA-2876) (Yeast).